The sequence spans 121 residues: Movement protein TGBp3 (121 aa).

Positions 1 to 40 are disordered; it reads MHYPTEADTSTGPNPSATSAPVRPRHVTPSLSPSSSSSPS. At 1 to 43 the chain is on the lumenal side; the sequence is MHYPTEADTSTGPNPSATSAPVRPRHVTPSLSPSSSSSPSPDS. A compositionally biased stretch (polar residues) spans 7–19; the sequence is ADTSTGPNPSATS. Residues 29 to 40 show a composition bias toward low complexity; it reads PSLSPSSSSSPS. The helical transmembrane segment at 44–64 threads the bilayer; it reads FYYFLAAAVILTAALAAALLT. Residues 65-121 lie on the Cytoplasmic side of the membrane; it reads PNPGCTIVITGHTTIIQGSCPIPPQLVLAAHPRGLSLEQYLKFTNTLPDGSQHRSHR.

Belongs to the Tymovirales TGBp3 protein family.

The protein localises to the host endoplasmic reticulum membrane. Functionally, plays a role in viral cell-to-cell propagation, by facilitating genome transport to neighboring plant cells through plasmosdesmata. May induce the formation of granular vesicles derived from the Endoplasmic reticulum, which align on actin filaments. This is Movement protein TGBp3 from Plantago asiatica (P1AMV).